The primary structure comprises 141 residues: Large ribosomal subunit protein uL11 (141 aa).

This sequence belongs to the universal ribosomal protein uL11 family. In terms of assembly, part of the ribosomal stalk of the 50S ribosomal subunit. Interacts with L10 and the large rRNA to form the base of the stalk. L10 forms an elongated spine to which L12 dimers bind in a sequential fashion forming a multimeric L10(L12)X complex. One or more lysine residues are methylated.

In terms of biological role, forms part of the ribosomal stalk which helps the ribosome interact with GTP-bound translation factors. This Pseudothermotoga lettingae (strain ATCC BAA-301 / DSM 14385 / NBRC 107922 / TMO) (Thermotoga lettingae) protein is Large ribosomal subunit protein uL11.